A 751-amino-acid chain; its full sequence is Myb-related protein A (751 aa).

Positions 1–22 are disordered; the sequence is MAKRSRSEDEDDDLQYADHDYE. HTH myb-type domains follow at residues 30–81, 82–137, and 138–188; these read KKLW…QKVL, NPEL…NPEV, and KKSS…RRKV. DNA-binding regions (H-T-H motif) lie at residues 58 to 81, 110 to 133, and 161 to 184; these read WTLI…QKVL, WSLI…HNHL, and WAEI…NSTM. Lys-199 is covalently cross-linked (Glycyl lysine isopeptide (Lys-Gly) (interchain with G-Cter in SUMO2)). Positions 230-294 are transcriptional activation domain; the sequence is IPGYQYVSPD…RLPPQPGSFS (65 aa). Positions 297–552 are negative regulatory domain; the sequence is SGSFLMDDSM…IRRSILGTTP (256 aa). At Lys-393 the chain carries N6-acetyllysine. Glycyl lysine isopeptide (Lys-Gly) (interchain with G-Cter in SUMO2) cross-links involve residues Lys-591 and Lys-601.

Component of the DREAM complex (also named LINC complex) at least composed of E2F4, E2F5, LIN9, LIN37, LIN52, LIN54, MYBL1, MYBL2, RBL1, RBL2, RBBP4, TFDP1 and TFDP2. The complex exists in quiescent cells where it represses cell cycle-dependent genes. It dissociates in S phase when LIN9, LIN37, LIN52 and LIN54 form a subcomplex that binds to MYBL2. Predominantly in the testis. Very low levels in the ovaries, spleen and brain.

It is found in the nucleus. Transcription factor that specifically recognizes the sequence 5'-YAAC[GT]G-3'. Acts as a master regulator of male meiosis by promoting expression of piRNAs: activates expression of both piRNA precursor RNAs and expression of protein-coding genes involved in piRNA metabolism, such as PIWIL1. The piRNA metabolic process mediates the repression of transposable elements during meiosis by forming complexes composed of piRNAs and Piwi proteins and governs the methylation and subsequent repression of transposons, which is essential for the germline integrity. Transcriptional activator of SOX30. This chain is Myb-related protein A (Mybl1), found in Mus musculus (Mouse).